The following is a 317-amino-acid chain: Olfactory receptor 1082 (317 aa).

The Extracellular segment spans residues 1–26 (MESGNSTRRFSSFFLLGFTENPQLHF). N5 carries N-linked (GlcNAc...) asparagine glycosylation. Residues 27 to 51 (LIFALFLSMYLVTVLGNLLIIMAII) form a helical membrane-spanning segment. Over 52-58 (TQSHLHT) the chain is Cytoplasmic. A helical transmembrane segment spans residues 59 to 80 (PMYFFLANLSFVDICFTSTTIP). Over 81 to 101 (KMLVNIYTQSKSITYEDCISQ) the chain is Extracellular. C98 and C190 are joined by a disulfide. The chain crosses the membrane as a helical span at residues 102-121 (MCVFLVFAELGNFLLAVMAY). The Cytoplasmic segment spans residues 122–140 (DRYVAXCHPLCYTVIVNHR). Residues 141-159 (LCILLLLLSWVISIFHAFI) traverse the membrane as a helical segment. At 160–197 (QSLIVLQLTFCGDVKIPHFFCELNQLSQLTCSDNFPSH) the chain is on the extracellular side. A helical transmembrane segment spans residues 198 to 220 (LIMNLVPVMLAAISFSGILYSYF). Over 221–237 (KIVSSIHSISTVQGKYK) the chain is Cytoplasmic. The chain crosses the membrane as a helical span at residues 238 to 261 (AFSTCASHLSIVSLFYSTGLGVYV). Topologically, residues 262-273 (SSAVVQSSHSAA) are extracellular. The helical transmembrane segment at 274 to 293 (SASVMYTVVTPMLNPFIYSL) threads the bilayer. At 294-317 (RNKDVKRALERLLEGNCKVHHWTG) the chain is on the cytoplasmic side.

It belongs to the G-protein coupled receptor 1 family. As to expression, olfactory epithelium.

Its subcellular location is the cell membrane. Functionally, odorant receptor. The protein is Olfactory receptor 1082 (Olr1082) of Rattus norvegicus (Rat).